Reading from the N-terminus, the 471-residue chain is MPSSGDAAGRRPHVVLIPSAGMGHLVPFGRLAVALSSGHGCDVSLVTVLPTVSTAESKHLDALFDAFPAVRRLDFELAPFDASEFPSADPFFLRFEAMRRSAPLLGPLLTGAGASALATDIALTSVVIPVAKEQGLPCHILFTASAAMLSLCAYFPTYLDANAGDGGGVGDVDIPGVYRIPKASIPQALHDPNHLFTRQFVANGRSLTSAAGILVNTFDALEPEAVAALQQGKVASGFPPVFAVGPLLPASNQAKDPQANYMEWLDAQPARSVVYVSFGSRKAISGEQLRELAAGLETSGHRFLWVVKSTVVDRDDAAELGELLGEGFLKRVEKRGLVTKAWVDQEEVLKHESVALFVSHCGWNSVTEAAASGVPVLALPRFGDQRVNSGVVARAGLGVWADTWSWEGEAGVIGAEEISEKVKAAMADEALRRKAASLAKAAAKAVAGGGSSHRCLVEFARLCQGGTCRTN.

The active-site Proton acceptor is histidine 24. Histidine 24 lines the an anthocyanidin pocket. Aspartate 120 acts as the Charge relay in catalysis. UDP-alpha-D-glucose is bound at residue threonine 143. Positions 280–281 (SR) are UDP. UDP-alpha-D-glucose contacts are provided by valine 343, glutamine 345, histidine 360, tryptophan 363, asparagine 364, serine 365, and glutamate 368. Glycine 383 contributes to the an anthocyanidin binding site. Positions 384 and 385 each coordinate UDP-alpha-D-glucose.

Belongs to the UDP-glycosyltransferase family.

The enzyme catalyses a 3'-hydro-2'-hydroxy-beta-oxodihydrochalcone + UDP-alpha-D-glucose = a 3'-(beta-D-glucopyranosyl)-2'-hydroxy-beta-oxodihydrochalcone + UDP + H(+). UDP-glucose-dependent glucosyltransferase catalyzing the c-glucosylation of 2-hydroxyflavanones. In Oryza sativa subsp. japonica (Rice), this protein is UDP-glycosyltransferase CGT.